The sequence spans 426 residues: Glutamyl-tRNA reductase (426 aa).

Residues 49 to 52 (TCNR), Ser-101, 106 to 108 (EPQ), and Gln-112 contribute to the substrate site. The active-site Nucleophile is the Cys-50. 181–186 (GAGETI) is a binding site for NADP(+). The segment at 404 to 426 (DRLFPEKPGLPTSPHSYPDREDR) is disordered.

The protein belongs to the glutamyl-tRNA reductase family. Homodimer.

The enzyme catalyses (S)-4-amino-5-oxopentanoate + tRNA(Glu) + NADP(+) = L-glutamyl-tRNA(Glu) + NADPH + H(+). The protein operates within porphyrin-containing compound metabolism; protoporphyrin-IX biosynthesis; 5-aminolevulinate from L-glutamyl-tRNA(Glu): step 1/2. Its function is as follows. Catalyzes the NADPH-dependent reduction of glutamyl-tRNA(Glu) to glutamate 1-semialdehyde (GSA). This Xanthomonas campestris pv. phaseoli protein is Glutamyl-tRNA reductase.